The following is a 386-amino-acid chain: Centrosomal protein of 44 kDa (386 aa).

The tract at residues 11–194 is binds with microtubules and centrioles; that stretch reads RKLEQVLRSL…GVPEGTVTST (184 aa). Residues 232 to 262 are a coiled coil; sequence ELTALQIALAECQEKLKKLTWIEKRLECLEA. The residue at position 329 (S329) is a Phosphoserine. The stretch at 359-382 forms a coiled coil; the sequence is SEETTMQKMERMKKMFEETAELLK.

As to quaternary structure, interacts with CROCC. Interacts with POC1B; the interaction is direct and recruits POC1B to centriolar microtubules. Binds to centriolar microtubules.

The protein resides in the cytoplasm. It is found in the cytoskeleton. The protein localises to the microtubule organizing center. Its subcellular location is the centrosome. It localises to the centriole. The protein resides in the spindle pole. It is found in the midbody. Centriole-enriched microtubule-binding protein involved in centriole biogenesis. In collaboration with CEP295 and POC1B, is required for the centriole-to-centrosome conversion by ensuring the formation of bona fide centriole wall. Functions as a linker component that maintains centrosome cohesion. Associates with CROCC and regulates its stability and localization to the centrosome. The chain is Centrosomal protein of 44 kDa (Cep44) from Rattus norvegicus (Rat).